Consider the following 294-residue polypeptide: Hydroxyethylthiazole kinase (294 aa).

Met57 contributes to the substrate binding site. Residues Arg132 and Ser196 each coordinate ATP. Residue Gly223 participates in substrate binding.

This sequence belongs to the Thz kinase family. Mg(2+) serves as cofactor.

It carries out the reaction 5-(2-hydroxyethyl)-4-methylthiazole + ATP = 4-methyl-5-(2-phosphooxyethyl)-thiazole + ADP + H(+). It functions in the pathway cofactor biosynthesis; thiamine diphosphate biosynthesis; 4-methyl-5-(2-phosphoethyl)-thiazole from 5-(2-hydroxyethyl)-4-methylthiazole: step 1/1. Its function is as follows. Catalyzes the phosphorylation of the hydroxyl group of 4-methyl-5-beta-hydroxyethylthiazole (THZ). This Bifidobacterium adolescentis (strain ATCC 15703 / DSM 20083 / NCTC 11814 / E194a) protein is Hydroxyethylthiazole kinase.